We begin with the raw amino-acid sequence, 206 residues long: Uracil phosphoribosyltransferase (206 aa).

Residues arginine 76, arginine 101, and 128–136 (DPMLATGTT) contribute to the 5-phospho-alpha-D-ribose 1-diphosphate site. Uracil is bound by residues isoleucine 191 and 196 to 198 (GDA). Aspartate 197 contacts 5-phospho-alpha-D-ribose 1-diphosphate.

It belongs to the UPRTase family. Mg(2+) is required as a cofactor.

The enzyme catalyses UMP + diphosphate = 5-phospho-alpha-D-ribose 1-diphosphate + uracil. It functions in the pathway pyrimidine metabolism; UMP biosynthesis via salvage pathway; UMP from uracil: step 1/1. Allosterically activated by GTP. In terms of biological role, catalyzes the conversion of uracil and 5-phospho-alpha-D-ribose 1-diphosphate (PRPP) to UMP and diphosphate. In Mycoplasma genitalium (strain ATCC 33530 / DSM 19775 / NCTC 10195 / G37) (Mycoplasmoides genitalium), this protein is Uracil phosphoribosyltransferase.